The following is a 324-amino-acid chain: dITP/XTP pyrophosphatase (324 aa).

Residues 1–127 (MTKTIFESKT…KNDNNFGDTI (127 aa)) form a unknown region. The segment at 128–324 (LIATHNEGKT…EVFPKWQLEN (197 aa)) is NTP pyrophosphatase. Residue 131–136 (THNEGK) participates in substrate binding. Mg(2+)-binding residues include Glu164 and Asp193. The Proton acceptor role is filled by Asp193. Residues Ser194, 277-280 (FGYD), Lys300, and 305-306 (HR) contribute to the substrate site.

This sequence belongs to the HAM1 NTPase family. As to quaternary structure, homodimer. It depends on Mg(2+) as a cofactor.

It carries out the reaction XTP + H2O = XMP + diphosphate + H(+). The catalysed reaction is dITP + H2O = dIMP + diphosphate + H(+). It catalyses the reaction ITP + H2O = IMP + diphosphate + H(+). Its function is as follows. Pyrophosphatase that catalyzes the hydrolysis of nucleoside triphosphates to their monophosphate derivatives, with a high preference for the non-canonical purine nucleotides XTP (xanthosine triphosphate), dITP (deoxyinosine triphosphate) and ITP. Seems to function as a house-cleaning enzyme that removes non-canonical purine nucleotides from the nucleotide pool, thus preventing their incorporation into DNA/RNA and avoiding chromosomal lesions. The protein is dITP/XTP pyrophosphatase of Streptococcus agalactiae serotype III (strain NEM316).